Here is an 80-residue protein sequence, read N- to C-terminus: Cell division activator CedA (80 aa).

Belongs to the CedA family.

Activates the cell division inhibited by chromosomal DNA over-replication. The polypeptide is Cell division activator CedA (Escherichia coli (strain SMS-3-5 / SECEC)).